The primary structure comprises 484 residues: ATP synthase subunit beta (484 aa).

162-169 (GGAGVGKT) provides a ligand contact to ATP.

The protein belongs to the ATPase alpha/beta chains family. F-type ATPases have 2 components, CF(1) - the catalytic core - and CF(0) - the membrane proton channel. CF(1) has five subunits: alpha(3), beta(3), gamma(1), delta(1), epsilon(1). CF(0) has four main subunits: a(1), b(1), b'(1) and c(9-12).

It is found in the cellular thylakoid membrane. It carries out the reaction ATP + H2O + 4 H(+)(in) = ADP + phosphate + 5 H(+)(out). Its function is as follows. Produces ATP from ADP in the presence of a proton gradient across the membrane. The catalytic sites are hosted primarily by the beta subunits. This is ATP synthase subunit beta from Trichodesmium erythraeum (strain IMS101).